We begin with the raw amino-acid sequence, 607 residues long: Glutamine--fructose-6-phosphate aminotransferase [isomerizing] (607 aa).

Cysteine 2 serves as the catalytic Nucleophile; for GATase activity. One can recognise a Glutamine amidotransferase type-2 domain in the interval 2 to 217 (CGIIGIIGRE…EGDWVVLTRE (216 aa)). 2 SIS domains span residues 283–422 (PDFD…VKGQ) and 455–597 (VATA…VDQP). Lysine 602 serves as the catalytic For Fru-6P isomerization activity.

Homodimer.

It is found in the cytoplasm. It catalyses the reaction D-fructose 6-phosphate + L-glutamine = D-glucosamine 6-phosphate + L-glutamate. In terms of biological role, catalyzes the first step in hexosamine metabolism, converting fructose-6P into glucosamine-6P using glutamine as a nitrogen source. This is Glutamine--fructose-6-phosphate aminotransferase [isomerizing] from Zymomonas mobilis subsp. mobilis (strain ATCC 31821 / ZM4 / CP4).